The following is a 274-amino-acid chain: 2,3,4,5-tetrahydropyridine-2,6-dicarboxylate N-succinyltransferase (274 aa).

Substrate contacts are provided by R104 and D141.

The protein belongs to the transferase hexapeptide repeat family. As to quaternary structure, homotrimer.

The protein resides in the cytoplasm. The enzyme catalyses (S)-2,3,4,5-tetrahydrodipicolinate + succinyl-CoA + H2O = (S)-2-succinylamino-6-oxoheptanedioate + CoA. It functions in the pathway amino-acid biosynthesis; L-lysine biosynthesis via DAP pathway; LL-2,6-diaminopimelate from (S)-tetrahydrodipicolinate (succinylase route): step 1/3. This chain is 2,3,4,5-tetrahydropyridine-2,6-dicarboxylate N-succinyltransferase, found in Buchnera aphidicola subsp. Acyrthosiphon pisum (strain APS) (Acyrthosiphon pisum symbiotic bacterium).